The chain runs to 216 residues: Putative flagellar filament outer layer-like protein (216 aa).

The disordered stretch occupies residues 1–22 (MFAQDAAQTGEQTTQNQGENGN). Positions 8–22 (QTGEQTTQNQGENGN) are enriched in low complexity.

The protein localises to the periplasmic flagellum. The protein resides in the periplasm. Its function is as follows. Might be part of the flagella. In Brachyspira hyodysenteriae (strain ATCC 49526 / WA1), this protein is Putative flagellar filament outer layer-like protein (flaAL).